Consider the following 78-residue polypeptide: Hainantoxin-XX.2 (78 aa).

Positions 1–23 (MKSATLLALSYLLIALYFLICEA) are cleaved as a signal peptide. The propeptide occupies 24 to 47 (EHSRYEEHEILEENMGDVVNLEQR). Disulfide bonds link cysteine 49/cysteine 62, cysteine 56/cysteine 66, and cysteine 61/cysteine 77.

This sequence belongs to the hainantoxin family. 20 subfamily. In terms of tissue distribution, expressed by the venom gland.

The protein resides in the secreted. In terms of biological role, moderately inhibits Kv1.1/KCNA1 and Kv1.2/KCNA2 and weakly inhibits Kv1.3/KCNA3, and Kv2.1/KCNB1 voltage-gated potassium channels. The polypeptide is Hainantoxin-XX.2 (Cyriopagopus hainanus (Chinese bird spider)).